The primary structure comprises 351 residues: Phosphoribosylformylglycinamidine cyclo-ligase (351 aa).

The protein belongs to the AIR synthase family.

It is found in the cytoplasm. It catalyses the reaction 2-formamido-N(1)-(5-O-phospho-beta-D-ribosyl)acetamidine + ATP = 5-amino-1-(5-phospho-beta-D-ribosyl)imidazole + ADP + phosphate + H(+). It participates in purine metabolism; IMP biosynthesis via de novo pathway; 5-amino-1-(5-phospho-D-ribosyl)imidazole from N(2)-formyl-N(1)-(5-phospho-D-ribosyl)glycinamide: step 2/2. The protein is Phosphoribosylformylglycinamidine cyclo-ligase of Burkholderia cenocepacia (strain ATCC BAA-245 / DSM 16553 / LMG 16656 / NCTC 13227 / J2315 / CF5610) (Burkholderia cepacia (strain J2315)).